A 113-amino-acid polypeptide reads, in one-letter code: UPF0342 protein spyM18_0873 (113 aa).

Belongs to the UPF0342 family.

The protein is UPF0342 protein spyM18_0873 of Streptococcus pyogenes serotype M18 (strain MGAS8232).